The primary structure comprises 98 residues: Large ribosomal subunit protein uL23 (98 aa).

Belongs to the universal ribosomal protein uL23 family. In terms of assembly, part of the 50S ribosomal subunit. Contacts protein L29, and trigger factor when it is bound to the ribosome.

One of the early assembly proteins it binds 23S rRNA. One of the proteins that surrounds the polypeptide exit tunnel on the outside of the ribosome. Forms the main docking site for trigger factor binding to the ribosome. This Lactobacillus gasseri (strain ATCC 33323 / DSM 20243 / BCRC 14619 / CIP 102991 / JCM 1131 / KCTC 3163 / NCIMB 11718 / NCTC 13722 / AM63) protein is Large ribosomal subunit protein uL23.